We begin with the raw amino-acid sequence, 38 residues long: Anthranilate phosphoribosyltransferase (38 aa).

This sequence belongs to the anthranilate phosphoribosyltransferase family. In terms of assembly, homodimer.

The catalysed reaction is N-(5-phospho-beta-D-ribosyl)anthranilate + diphosphate = 5-phospho-alpha-D-ribose 1-diphosphate + anthranilate. The protein operates within amino-acid biosynthesis; L-tryptophan biosynthesis; L-tryptophan from chorismate: step 2/5. In terms of biological role, catalyzes the transfer of the phosphoribosyl group of 5-phosphorylribose-1-pyrophosphate (PRPP) to anthranilate to yield N-(5'-phosphoribosyl)-anthranilate (PRA). The polypeptide is Anthranilate phosphoribosyltransferase (trpD) (Serratia marcescens).